Here is an 87-residue protein sequence, read N- to C-terminus: Small ribosomal subunit protein bS20 (87 aa).

The protein belongs to the bacterial ribosomal protein bS20 family.

Its function is as follows. Binds directly to 16S ribosomal RNA. In Neorickettsia sennetsu (strain ATCC VR-367 / Miyayama) (Ehrlichia sennetsu), this protein is Small ribosomal subunit protein bS20.